The chain runs to 360 residues: Phosphoserine aminotransferase (360 aa).

Arginine 41 is an L-glutamate binding site. Residues tryptophan 101, threonine 152, aspartate 172, and glutamine 195 each contribute to the pyridoxal 5'-phosphate site. Lysine 196 carries the post-translational modification N6-(pyridoxal phosphate)lysine. Position 237-238 (237-238 (NT)) interacts with pyridoxal 5'-phosphate.

This sequence belongs to the class-V pyridoxal-phosphate-dependent aminotransferase family. SerC subfamily. Homodimer. Pyridoxal 5'-phosphate serves as cofactor.

Its subcellular location is the cytoplasm. The catalysed reaction is O-phospho-L-serine + 2-oxoglutarate = 3-phosphooxypyruvate + L-glutamate. It carries out the reaction 4-(phosphooxy)-L-threonine + 2-oxoglutarate = (R)-3-hydroxy-2-oxo-4-phosphooxybutanoate + L-glutamate. It participates in amino-acid biosynthesis; L-serine biosynthesis; L-serine from 3-phospho-D-glycerate: step 2/3. It functions in the pathway cofactor biosynthesis; pyridoxine 5'-phosphate biosynthesis; pyridoxine 5'-phosphate from D-erythrose 4-phosphate: step 3/5. In terms of biological role, catalyzes the reversible conversion of 3-phosphohydroxypyruvate to phosphoserine and of 3-hydroxy-2-oxo-4-phosphonooxybutanoate to phosphohydroxythreonine. The chain is Phosphoserine aminotransferase from Paraburkholderia phymatum (strain DSM 17167 / CIP 108236 / LMG 21445 / STM815) (Burkholderia phymatum).